The primary structure comprises 453 residues: uncharacterized protein (453 aa).

A signal peptide spans 1–23 (MFLLQRFFIYGLFLACFYTTVFG). Topologically, residues 24 to 137 (EKHFEAEEYR…EKQFSYSSGT (114 aa)) are lumenal. The chain crosses the membrane as a helical span at residues 138-158 (NGILATFLTAIPPNIFILLVP). Residues 159-165 (KSFDTSM) are Cytoplasmic-facing. A helical membrane pass occupies residues 166–186 (LNLFVAVSAGSLLGDVFLQLL). Over 187 to 194 (PTVYSTNG) the chain is Lumenal. Residues 195–215 (GDFPASSVYSILIGALVFFLM) form a helical membrane-spanning segment. Topologically, residues 216–358 (DKGIRILIHE…LRNGYTKSQV (143 aa)) are cytoplasmic. Over residues 229-238 (SLSKPKKDGE) the composition is skewed to basic and acidic residues. The interval 229-278 (SLSKPKKDGEETSSVNKPSASSTQTDVKGVEGLRKRNVKDDQNSKGHEPD) is disordered. Residues 240 to 254 (TSSVNKPSASSTQTD) are compositionally biased toward polar residues. A compositionally biased stretch (basic and acidic residues) spans 256–278 (KGVEGLRKRNVKDDQNSKGHEPD). A helical transmembrane segment spans residues 359 to 379 (LVLQMITMVTGLLGAIVATYI). Topologically, residues 380-399 (YTASSSSSPYGSFLLQLEDK) are lumenal. The chain crosses the membrane as a helical span at residues 400–420 (LLPFTAGGFLYIAYLGVFPEL). Over 421 to 432 (LEINLSKGKLGN) the chain is Cytoplasmic. Residues 433 to 453 (MIYTALYMMFIVGGFSFLYYV) form a helical membrane-spanning segment.

This sequence belongs to the ZIP transporter (TC 2.A.5) family. KE4/Catsup subfamily.

Its subcellular location is the endoplasmic reticulum membrane. This is an uncharacterized protein from Schizosaccharomyces pombe (strain 972 / ATCC 24843) (Fission yeast).